The following is an 88-amino-acid chain: Protein transport protein Sec61 subunit beta (88 aa).

Residues 1–41 (MDSSVPGGQRTLQKRRNAQLQKEKKANQTPASPRQAGFGGS) form a disordered region. At 1–60 (MDSSVPGGQRTLQKRRNAQLQKEKKANQTPASPRQAGFGGSSSSILKLYTDEANGLRVDP) the chain is on the cytoplasmic side. A helical transmembrane segment spans residues 61-81 (LVVLFLAVAFVFSVVALHVVA).

It belongs to the SEC61-beta family. Heterotrimeric complex composed of SEC61, SEB1 and SSS1.

Its subcellular location is the endoplasmic reticulum membrane. In terms of biological role, necessary for protein translocation in the endoplasmic reticulum. In Kluyveromyces lactis (strain ATCC 8585 / CBS 2359 / DSM 70799 / NBRC 1267 / NRRL Y-1140 / WM37) (Yeast), this protein is Protein transport protein Sec61 subunit beta (SBH1).